A 458-amino-acid chain; its full sequence is Probable beta-eliminating lyase (458 aa).

Residue Lys257 is modified to N6-(pyridoxal phosphate)lysine.

It belongs to the beta-eliminating lyase family. It depends on pyridoxal 5'-phosphate as a cofactor.

In Trichomonas vaginalis (strain ATCC PRA-98 / G3), this protein is Probable beta-eliminating lyase.